The following is a 276-amino-acid chain: Large ribosomal subunit protein uL2 (276 aa).

Disordered regions lie at residues 1-61 (MALK…HKQK) and 224-276 (AMNP…KKKN). A compositionally biased stretch (basic and acidic residues) spans 15-31 (GRIDLRKDEITAQKPEK).

It belongs to the universal ribosomal protein uL2 family. Part of the 50S ribosomal subunit. Forms a bridge to the 30S subunit in the 70S ribosome.

Functionally, one of the primary rRNA binding proteins. Required for association of the 30S and 50S subunits to form the 70S ribosome, for tRNA binding and peptide bond formation. It has been suggested to have peptidyltransferase activity; this is somewhat controversial. Makes several contacts with the 16S rRNA in the 70S ribosome. The chain is Large ribosomal subunit protein uL2 from Treponema denticola (strain ATCC 35405 / DSM 14222 / CIP 103919 / JCM 8153 / KCTC 15104).